A 132-amino-acid polypeptide reads, in one-letter code: Small ribosomal subunit protein uS9 (132 aa).

The protein belongs to the universal ribosomal protein uS9 family.

This Leptospira borgpetersenii serovar Hardjo-bovis (strain JB197) protein is Small ribosomal subunit protein uS9.